Here is a 364-residue protein sequence, read N- to C-terminus: Peptide chain release factor 1 (364 aa).

Q230 carries the post-translational modification N5-methylglutamine.

This sequence belongs to the prokaryotic/mitochondrial release factor family. Methylated by PrmC. Methylation increases the termination efficiency of RF1.

It is found in the cytoplasm. In terms of biological role, peptide chain release factor 1 directs the termination of translation in response to the peptide chain termination codons UAG and UAA. This is Peptide chain release factor 1 from Acidothermus cellulolyticus (strain ATCC 43068 / DSM 8971 / 11B).